Here is a 367-residue protein sequence, read N- to C-terminus: Phosphoribosylaminoimidazole-succinocarboxamide synthase (367 aa).

It belongs to the SAICAR synthetase family.

It catalyses the reaction 5-amino-1-(5-phospho-D-ribosyl)imidazole-4-carboxylate + L-aspartate + ATP = (2S)-2-[5-amino-1-(5-phospho-beta-D-ribosyl)imidazole-4-carboxamido]succinate + ADP + phosphate + 2 H(+). Its pathway is purine metabolism; IMP biosynthesis via de novo pathway; 5-amino-1-(5-phospho-D-ribosyl)imidazole-4-carboxamide from 5-amino-1-(5-phospho-D-ribosyl)imidazole-4-carboxylate: step 1/2. This chain is Phosphoribosylaminoimidazole-succinocarboxamide synthase, found in Shewanella halifaxensis (strain HAW-EB4).